An 811-amino-acid chain; its full sequence is DNA mismatch repair protein MutS (811 aa).

595–602 (GPNMSGKS) contributes to the ATP binding site.

It belongs to the DNA mismatch repair MutS family.

In terms of biological role, this protein is involved in the repair of mismatches in DNA. It is possible that it carries out the mismatch recognition step. This protein has a weak ATPase activity. The sequence is that of DNA mismatch repair protein MutS from Pseudothermotoga lettingae (strain ATCC BAA-301 / DSM 14385 / NBRC 107922 / TMO) (Thermotoga lettingae).